A 94-amino-acid chain; its full sequence is Large ribosomal subunit protein uL23 (94 aa).

This sequence belongs to the universal ribosomal protein uL23 family. As to quaternary structure, part of the 50S ribosomal subunit. Contacts protein L29, and trigger factor when it is bound to the ribosome.

Its function is as follows. One of the early assembly proteins it binds 23S rRNA. One of the proteins that surrounds the polypeptide exit tunnel on the outside of the ribosome. Forms the main docking site for trigger factor binding to the ribosome. This chain is Large ribosomal subunit protein uL23, found in Phytoplasma australiense.